A 509-amino-acid chain; its full sequence is SH2 domain-containing adapter protein B (509 aa).

Disordered regions lie at residues 1–103 (MAKW…GSSL) and 144–178 (SGAGAAASSSSSSGSPHLYRSSSERRPATPAEVRY). Residues 1–410 (MAKWLNKYFS…PAVPLEKQIW (410 aa)) are mediates interaction with LAT, PTK2/FAK1, JAK1 and JAK3. A compositionally biased stretch (low complexity) spans 44-61 (VPQASSAASASCGPATAS). Residues 62–79 (CFSASSGSLPDDSGSTSD) are compositionally biased toward polar residues. Ser-102 is modified (phosphoserine). Low complexity predominate over residues 144 to 158 (SGAGAAASSSSSSGS). A Glycyl lysine isopeptide (Lys-Gly) (interchain with G-Cter in SUMO2) cross-link involves residue Lys-187. The interval 229 to 385 (AEESGAGKKD…APGGGFKPIK (157 aa)) is disordered. Composition is skewed to basic and acidic residues over residues 233 to 242 (GAGKKDKVTI) and 250 to 262 (FDAKNDLKSKAGK). A phosphoserine mark is found at Ser-307 and Ser-317. Positions 307–317 (SVDSDSESTVS) are enriched in polar residues. Over residues 319-334 (RLRESKLPQDDDRPAD) the composition is skewed to basic and acidic residues. Ser-388 carries the phosphoserine modification. Positions 410–504 (WYHGAISRGD…AEHLSLLYPV (95 aa)) constitute an SH2 domain.

Interacts with PTPN11. Interacts with phosphorylated 'Tyr-720' of the ligand-activated receptor PDGFRA via its SH2 domain. Interacts with the ligand-activated receptors PDGFRB, FGFR1, KDR/VEGFR2, IL2RB and IL2RG. Interacts with EPS8 and V-SRC. Interacts with GRB2 and GRAP. Interacts with CD3Z. Interacts with tyrosine-phosphorylated LAT upon T-cell antigen receptor activation. Interacts with PLCG1. Interacts with ZAP70, LCP2/SLP-76, VAV1 and GRAP2. Interacts with JAK1 and JAK3. Interacts with PTK2/FAK1. Interacts with CRK/CrKII. Interacts with IRS2. In terms of processing, phosphorylated upon PDGFRA, PDGFRB, TCR, IL2 receptor, FGFR1 or VEGFR2 activation. In terms of tissue distribution, widely expressed.

It localises to the cytoplasm. It is found in the cell membrane. In terms of biological role, adapter protein which regulates several signal transduction cascades by linking activated receptors to downstream signaling components. May play a role in angiogenesis by regulating FGFR1, VEGFR2 and PDGFR signaling. May also play a role in T-cell antigen receptor/TCR signaling, interleukin-2 signaling, apoptosis and neuronal cells differentiation by mediating basic-FGF and NGF-induced signaling cascades. May also regulate IRS1 and IRS2 signaling in insulin-producing cells. The polypeptide is SH2 domain-containing adapter protein B (SHB) (Homo sapiens (Human)).